The primary structure comprises 454 residues: Histidine--tRNA ligase (454 aa).

This sequence belongs to the class-II aminoacyl-tRNA synthetase family. In terms of assembly, homodimer.

It is found in the cytoplasm. It carries out the reaction tRNA(His) + L-histidine + ATP = L-histidyl-tRNA(His) + AMP + diphosphate + H(+). This is Histidine--tRNA ligase from Phocaeicola vulgatus (strain ATCC 8482 / DSM 1447 / JCM 5826 / CCUG 4940 / NBRC 14291 / NCTC 11154) (Bacteroides vulgatus).